The chain runs to 271 residues: Enolase-phosphatase E1 (271 aa).

Mg(2+) contacts are provided by Asp16 and Glu18. Residues Ser150–Ser151 and Lys199 contribute to the substrate site. Asp226 is a Mg(2+) binding site.

This sequence belongs to the HAD-like hydrolase superfamily. MasA/MtnC family. As to quaternary structure, monomer. Mg(2+) serves as cofactor.

The protein resides in the cytoplasm. It localises to the nucleus. It catalyses the reaction 5-methylsulfanyl-2,3-dioxopentyl phosphate + H2O = 1,2-dihydroxy-5-(methylsulfanyl)pent-1-en-3-one + phosphate. It participates in amino-acid biosynthesis; L-methionine biosynthesis via salvage pathway; L-methionine from S-methyl-5-thio-alpha-D-ribose 1-phosphate: step 3/6. Its pathway is amino-acid biosynthesis; L-methionine biosynthesis via salvage pathway; L-methionine from S-methyl-5-thio-alpha-D-ribose 1-phosphate: step 4/6. Bifunctional enzyme that catalyzes the enolization of 2,3-diketo-5-methylthiopentyl-1-phosphate (DK-MTP-1-P) into the intermediate 2-hydroxy-3-keto-5-methylthiopentenyl-1-phosphate (HK-MTPenyl-1-P), which is then dephosphorylated to form the acireductone 1,2-dihydroxy-3-keto-5-methylthiopentene (DHK-MTPene). The protein is Enolase-phosphatase E1 of Candida dubliniensis (strain CD36 / ATCC MYA-646 / CBS 7987 / NCPF 3949 / NRRL Y-17841) (Yeast).